The primary structure comprises 274 residues: Shikimate dehydrogenase (NADP(+)) (274 aa).

Shikimate-binding positions include 15–17 and threonine 62; that span reads SKS. Catalysis depends on lysine 66, which acts as the Proton acceptor. NADP(+) is bound at residue aspartate 78. 2 residues coordinate shikimate: asparagine 87 and aspartate 102. NADP(+)-binding positions include 127–131 and methionine 215; that span reads GAGGA. Residue tyrosine 217 participates in shikimate binding. Glycine 239 serves as a coordination point for NADP(+).

This sequence belongs to the shikimate dehydrogenase family. As to quaternary structure, homodimer.

It carries out the reaction shikimate + NADP(+) = 3-dehydroshikimate + NADPH + H(+). Its pathway is metabolic intermediate biosynthesis; chorismate biosynthesis; chorismate from D-erythrose 4-phosphate and phosphoenolpyruvate: step 4/7. Functionally, involved in the biosynthesis of the chorismate, which leads to the biosynthesis of aromatic amino acids. Catalyzes the reversible NADPH linked reduction of 3-dehydroshikimate (DHSA) to yield shikimate (SA). This Dechloromonas aromatica (strain RCB) protein is Shikimate dehydrogenase (NADP(+)).